A 257-amino-acid polypeptide reads, in one-letter code: uncharacterized protein (257 aa).

Residues 7 to 27 (LMLGICLVLLIILIVGYVIMT) form a helical membrane-spanning segment.

The protein belongs to the staphylococcal tandem lipoprotein family.

The protein resides in the cell membrane. This is an uncharacterized protein from Staphylococcus aureus (strain Mu50 / ATCC 700699).